We begin with the raw amino-acid sequence, 157 residues long: MQKIGIYPGTFDPVTNGHIDIIHRSSELFEKLIVAVAHSSAKNPMFSLDERLKMIQLATKSFKNVECVAFEGLLANLAKEYHCKVLVRGLRVVSDFEYELQMGYANKSLNHELETLYFMPTLQNAFISSSIVRSIIAHKGDASHLVPKEIYPLISKA.

Position 10 (Thr-10) interacts with substrate. ATP contacts are provided by residues 10-11 (TF) and His-18. Substrate-binding residues include Lys-42, Leu-74, and Arg-88. Residues 89-91 (GLR), Glu-99, and 124-130 (NAFISSS) contribute to the ATP site.

This sequence belongs to the bacterial CoaD family. As to quaternary structure, homohexamer. Mg(2+) serves as cofactor.

It localises to the cytoplasm. It carries out the reaction (R)-4'-phosphopantetheine + ATP + H(+) = 3'-dephospho-CoA + diphosphate. It participates in cofactor biosynthesis; coenzyme A biosynthesis; CoA from (R)-pantothenate: step 4/5. Its activity is regulated as follows. Tightly binds to CoA, which is presumably a feedback inhibitor. Potently inhibited by D-amethopterin, which simultaneously occupies the 4'-phosphopantetheine- and ATP-binding sites; following treatment with D-amethopterin, H.pylori exhibits morphological characteristics associated with cell death, showing that D-amethopterin displays antimicrobial activity. Reversibly transfers an adenylyl group from ATP to 4'-phosphopantetheine, yielding dephospho-CoA (dPCoA) and pyrophosphate. In Helicobacter pylori (strain ATCC 700392 / 26695) (Campylobacter pylori), this protein is Phosphopantetheine adenylyltransferase.